The sequence spans 303 residues: Putative S-adenosyl-L-methionine-dependent methyltransferase MAV_4435 (303 aa).

Residues Asp-129 and 158 to 159 contribute to the S-adenosyl-L-methionine site; that span reads DL.

It belongs to the UPF0677 family.

Functionally, exhibits S-adenosyl-L-methionine-dependent methyltransferase activity. The chain is Putative S-adenosyl-L-methionine-dependent methyltransferase MAV_4435 from Mycobacterium avium (strain 104).